A 414-amino-acid chain; its full sequence is Esterase FrsA (414 aa).

The protein belongs to the FrsA family.

The catalysed reaction is a carboxylic ester + H2O = an alcohol + a carboxylate + H(+). Catalyzes the hydrolysis of esters. The chain is Esterase FrsA from Salmonella typhi.